The following is a 259-amino-acid chain: Haloacid dehalogenase-like hydrolase domain-containing protein 2 (259 aa).

Residues Asp-13 and Ser-15 each coordinate Mg(2+). Substrate-binding positions include 13 to 15 (DLS) and 46 to 47 (TN). A coiled-coil region spans residues 47–71 (NTTKESKQDLLERLRKLEFDISEDE). Residue Lys-50 is modified to N6-succinyllysine. A substrate-binding site is contributed by Lys-179. Residue Asp-204 participates in Mg(2+) binding.

Belongs to the HAD-like hydrolase superfamily. Mg(2+) is required as a cofactor.

This chain is Haloacid dehalogenase-like hydrolase domain-containing protein 2 (HDHD2), found in Homo sapiens (Human).